A 284-amino-acid polypeptide reads, in one-letter code: MPELPEVETVRLGLEKVTVGMQIMGGEVLYPRTIAHPQSPQVFIQGLQDATFLSWMRRGKYLLSQLSFSTQQPSGWLGVHLRMTGQLLWVAQDEPVQKHTRVRLFFVNNRELRFVDQRTFGQMWWVAPTEDPKQVISGLQKLGPEPFSEEFSVDYFWESLQGRKRSIKSALLDQALVAGVGNIYADEALFMSEIRPTTACHQLQTEQVQRLRTAIIEVLSTSIGAGGTTFSDFRDLKGVNGNYGGMAWVYGRQGQPCRTCGQTIERIKLVGRSTHFCPQCQPES.

The active-site Schiff-base intermediate with DNA is the Pro2. Glu3 acts as the Proton donor in catalysis. Lys60 functions as the Proton donor; for beta-elimination activity in the catalytic mechanism. His99, Arg118, and Arg163 together coordinate DNA. Residues 248–282 form an FPG-type zinc finger; the sequence is WVYGRQGQPCRTCGQTIERIKLVGRSTHFCPQCQP. Arg272 acts as the Proton donor; for delta-elimination activity in catalysis.

It belongs to the FPG family. Monomer. It depends on Zn(2+) as a cofactor.

It carries out the reaction Hydrolysis of DNA containing ring-opened 7-methylguanine residues, releasing 2,6-diamino-4-hydroxy-5-(N-methyl)formamidopyrimidine.. It catalyses the reaction 2'-deoxyribonucleotide-(2'-deoxyribose 5'-phosphate)-2'-deoxyribonucleotide-DNA = a 3'-end 2'-deoxyribonucleotide-(2,3-dehydro-2,3-deoxyribose 5'-phosphate)-DNA + a 5'-end 5'-phospho-2'-deoxyribonucleoside-DNA + H(+). In terms of biological role, involved in base excision repair of DNA damaged by oxidation or by mutagenic agents. Acts as a DNA glycosylase that recognizes and removes damaged bases. Has a preference for oxidized purines, such as 7,8-dihydro-8-oxoguanine (8-oxoG). Has AP (apurinic/apyrimidinic) lyase activity and introduces nicks in the DNA strand. Cleaves the DNA backbone by beta-delta elimination to generate a single-strand break at the site of the removed base with both 3'- and 5'-phosphates. This Acaryochloris marina (strain MBIC 11017) protein is Formamidopyrimidine-DNA glycosylase.